A 659-amino-acid polypeptide reads, in one-letter code: Probable acyl-coenzyme A oxidase acox-1.5 (659 aa).

Residues 148-151 (YAQT), 156-157 (GT), and glycine 190 contribute to the FAD site. Substrate-binding positions include 284–287 (KVGY) and arginine 294. FAD contacts are provided by residues arginine 319 and 339–342 (QQYR). ATP is bound by residues histidine 395 and glutamine 403. Glycine 410 serves as a coordination point for FAD. 432-433 (YE) serves as a coordination point for substrate. The active-site Proton acceptor is the glutamate 433. Glutamate 435 provides a ligand contact to FAD. 524-527 (KAAR) is a binding site for ATP. Residues 657-659 (SKL) carry the Microbody targeting signal motif.

It belongs to the acyl-CoA oxidase family. Homodimer. FAD serves as cofactor.

The protein localises to the peroxisome. It functions in the pathway lipid metabolism; peroxisomal fatty acid beta-oxidation. Activated by ATP. ATP binding leads to a conformational change that promotes FAD cofactor binding and enzyme activity. ATP binding likely occurs during acox-1.5 folding and/or dimer formation. Its function is as follows. Involved in the first step of peroxisomal beta-oxidation by catalyzing the desaturation of fatty acid-derived side chains. In Caenorhabditis elegans, this protein is Probable acyl-coenzyme A oxidase acox-1.5.